Reading from the N-terminus, the 483-residue chain is Glutamyl-tRNA(Gln) amidotransferase subunit A (483 aa).

Catalysis depends on charge relay system residues K76 and S151. Residue S175 is the Acyl-ester intermediate of the active site.

This sequence belongs to the amidase family. GatA subfamily. In terms of assembly, heterotrimer of A, B and C subunits.

It carries out the reaction L-glutamyl-tRNA(Gln) + L-glutamine + ATP + H2O = L-glutaminyl-tRNA(Gln) + L-glutamate + ADP + phosphate + H(+). Functionally, allows the formation of correctly charged Gln-tRNA(Gln) through the transamidation of misacylated Glu-tRNA(Gln) in organisms which lack glutaminyl-tRNA synthetase. The reaction takes place in the presence of glutamine and ATP through an activated gamma-phospho-Glu-tRNA(Gln). The chain is Glutamyl-tRNA(Gln) amidotransferase subunit A from Pseudomonas entomophila (strain L48).